The sequence spans 464 residues: L-cystine uptake protein TcyP (464 aa).

A run of 10 helical transmembrane segments spans residues Thr-3–Met-23, Val-34–Pro-54, Tyr-73–Phe-93, Gly-107–Ala-127, Pro-184–Val-204, Ile-225–Met-245, Phe-263–Ala-283, Ala-347–Leu-367, Phe-371–Gly-391, and Phe-395–Ile-415.

It belongs to the dicarboxylate/amino acid:cation symporter (DAACS) (TC 2.A.23) family.

Its subcellular location is the membrane. In terms of biological role, mediates uptake of L-cystine, the oxidized form of L-cysteine. The polypeptide is L-cystine uptake protein TcyP (Bacillus cereus (strain ATCC 14579 / DSM 31 / CCUG 7414 / JCM 2152 / NBRC 15305 / NCIMB 9373 / NCTC 2599 / NRRL B-3711)).